The chain runs to 78 residues: Small ribosomal subunit protein bS18 (78 aa).

This sequence belongs to the bacterial ribosomal protein bS18 family. As to quaternary structure, part of the 30S ribosomal subunit. Forms a tight heterodimer with protein bS6.

In terms of biological role, binds as a heterodimer with protein bS6 to the central domain of the 16S rRNA, where it helps stabilize the platform of the 30S subunit. This is Small ribosomal subunit protein bS18 from Geobacillus kaustophilus (strain HTA426).